The chain runs to 157 residues: Protein Smg homolog (157 aa).

The protein belongs to the Smg family.

The polypeptide is Protein Smg homolog (Shewanella sediminis (strain HAW-EB3)).